The sequence spans 513 residues: Putative thymidine phosphorylase (513 aa).

This sequence belongs to the thymidine/pyrimidine-nucleoside phosphorylase family. Type 2 subfamily.

The catalysed reaction is thymidine + phosphate = 2-deoxy-alpha-D-ribose 1-phosphate + thymine. This chain is Putative thymidine phosphorylase, found in Bradyrhizobium diazoefficiens (strain JCM 10833 / BCRC 13528 / IAM 13628 / NBRC 14792 / USDA 110).